Reading from the N-terminus, the 514-residue chain is Putative binding protein HI_0213 (514 aa).

A signal peptide spans 1 to 23 (MNNLFALCQRSAVIFSIIFTVVA). A lipid anchor (N-palmitoyl cysteine) is attached at Cys-24. A lipid anchor (S-diacylglycerol cysteine) is attached at Cys-24.

Belongs to the bacterial solute-binding protein 5 family.

It localises to the cell membrane. In terms of biological role, part of a binding-protein-dependent transport system. This Haemophilus influenzae (strain ATCC 51907 / DSM 11121 / KW20 / Rd) protein is Putative binding protein HI_0213.